The sequence spans 30 residues: Cyclotide hyen-L (30 aa).

The segment at residues 1-30 (GIPCAESCVYIPCTVTALLGCSCSDKVCYN) is a cross-link (cyclopeptide (Gly-Asn)). Cystine bridges form between cysteine 4/cysteine 21, cysteine 8/cysteine 23, and cysteine 13/cysteine 28.

In terms of processing, this is a cyclic peptide. In terms of tissue distribution, detected in stems (at protein level).

Its function is as follows. Probably participates in a plant defense mechanism. Has cytotoxic activity against HUVEC cells (LC(50)= 2.26 uM) and various cancer cells including HeLa (LC(50)= 3.48 uM), MCF-7 and K562. Displays very weak hemolytic activity. Binds to and induces leakage in phospholipd membranes, particularly ones containing 1-palmitoyl-2-oleophosphatidylethanolamine (POPE). This is Cyclotide hyen-L from Pigea enneasperma (Spade flower).